A 309-amino-acid chain; its full sequence is Ribosomal RNA small subunit methyltransferase H (309 aa).

S-adenosyl-L-methionine-binding positions include 41–43, Asp-61, Phe-85, Asp-102, and Gln-109; that span reads GGH.

It belongs to the methyltransferase superfamily. RsmH family.

The protein resides in the cytoplasm. The catalysed reaction is cytidine(1402) in 16S rRNA + S-adenosyl-L-methionine = N(4)-methylcytidine(1402) in 16S rRNA + S-adenosyl-L-homocysteine + H(+). Its function is as follows. Specifically methylates the N4 position of cytidine in position 1402 (C1402) of 16S rRNA. The sequence is that of Ribosomal RNA small subunit methyltransferase H from Albidiferax ferrireducens (strain ATCC BAA-621 / DSM 15236 / T118) (Rhodoferax ferrireducens).